The following is a 301-amino-acid chain: Cell division control protein 2 homolog 1 (301 aa).

The region spanning 5–297 (YERLQKIGEG…AAQALEHPYF (293 aa)) is the Protein kinase domain. ATP-binding positions include 11–19 (IGEGSYGVV) and Lys-34. Ser-15 carries the phosphoserine modification. Tyr-16 carries the post-translational modification Phosphotyrosine. Asp-127 functions as the Proton acceptor in the catalytic mechanism. Thr-160 carries the phosphothreonine; by CAK modification.

The protein belongs to the protein kinase superfamily. CMGC Ser/Thr protein kinase family. CDC2/CDKX subfamily. Forms a stable but non-covalent complex with a regulatory subunit and with a cyclin.

The catalysed reaction is L-seryl-[protein] + ATP = O-phospho-L-seryl-[protein] + ADP + H(+). It catalyses the reaction L-threonyl-[protein] + ATP = O-phospho-L-threonyl-[protein] + ADP + H(+). Phosphorylation at Ser-15 or Tyr-16 inactivates the enzyme, while phosphorylation at Thr-160 activates it. Its function is as follows. Probably involved in the control of the cell cycle. The sequence is that of Cell division control protein 2 homolog 1 (CRK1) from Trypanosoma brucei brucei.